Reading from the N-terminus, the 111-residue chain is uncharacterized protein (111 aa).

Residues 1–85 (MTGLMKAFQK…TSSREDEQKL (85 aa)) form a disordered region. Residues 11 to 23 (LSPTKRQYAEITQ) are compositionally biased toward polar residues. A compositionally biased stretch (low complexity) spans 24 to 42 (SNSSISSSSSGSKYNDSSS). Polar residues predominate over residues 56-77 (ARASTSTQAQKPASSQQKGGTS).

This is an uncharacterized protein from Microplitis demolitor (Parasitoid wasp).